The chain runs to 639 residues: Developmental regulatory protein wetA (639 aa).

Disordered regions lie at residues 65-97 (MDPS…EFDF), 206-369 (TTMR…SAAS), 418-552 (GLLI…SADE), and 587-613 (LMTG…RRRR). A compositionally biased stretch (basic residues) spans 69–78 (HHHHHPHHHA). Polar residues-rich tracts occupy residues 81 to 90 (ESSTTSSGVS) and 214 to 226 (VSQT…SPSM). The segment covering 246–255 (RGRRAHRAHT) has biased composition (basic residues). Low complexity-rich tracts occupy residues 256-275 (QHAL…QAHQ), 346-369 (QQQW…SAAS), and 506-526 (HSSG…RVSV).

Belongs to the wetA family.

BrlA, abaA and wetA are pivotal regulators of conidiophore development and conidium maturation. They act individually and together to regulate their own expression and that of numerous other sporulation-specific genes. Acts as a crucial regulator of both conidiation capacity and conidial quality. Plays a role in virulence. This is Developmental regulatory protein wetA from Beauveria bassiana (strain ARSEF 2860) (White muscardine disease fungus).